A 1396-amino-acid polypeptide reads, in one-letter code: ATP-dependent helicase/nuclease subunit A (1396 aa).

The disordered stretch occupies residues 1-25 (MNREALCHDDPIGHDRLRPDSIPRD). A UvrD-like helicase ATP-binding domain is found at 26–532 (PKWTDEQWQA…IDLAKNFRSR (507 aa)). Position 47–54 (47–54 (AAAGAGKT)) interacts with ATP. Disordered regions lie at residues 590–649 (DADG…GQPT) and 1171–1205 (HSPETPPSSETPPSLEIPPSLETPPSLETQTPSPD). In terms of domain architecture, UvrD-like helicase C-terminal spans 615–920 (HKNIAKAGES…RIMSIHKSKG (306 aa)). Low complexity predominate over residues 1181-1199 (TPPSLEIPPSLETPPSLET).

It belongs to the helicase family. AddA subfamily. Heterodimer of AddA and AddB/RexB. Requires Mg(2+) as cofactor.

The enzyme catalyses Couples ATP hydrolysis with the unwinding of duplex DNA by translocating in the 3'-5' direction.. The catalysed reaction is ATP + H2O = ADP + phosphate + H(+). Its function is as follows. The heterodimer acts as both an ATP-dependent DNA helicase and an ATP-dependent, dual-direction single-stranded exonuclease. Recognizes the chi site generating a DNA molecule suitable for the initiation of homologous recombination. The AddA nuclease domain is required for chi fragment generation; this subunit has the helicase and 3' -&gt; 5' nuclease activities. This Heliobacterium modesticaldum (strain ATCC 51547 / Ice1) protein is ATP-dependent helicase/nuclease subunit A.